The sequence spans 279 residues: Troponin T, fast skeletal muscle (279 aa).

Over residues 1-21 the composition is skewed to acidic residues; sequence MSDEEVEHVEEQYEEEEEAQE. The segment at 1-82 is disordered; the sequence is MSDEEVEHVE…EKVDFDDIQK (82 aa). N-acetylserine is present on S2. S2 bears the Phosphoserine mark. Composition is skewed to basic and acidic residues over residues 28–49 and 70–82; these read EVHE…ALED and PEGE…DIQK. Position 98 is a phosphoserine (S98). Positions 121 to 163 are enriched in basic and acidic residues; sequence RAERAEQQRIRAEKERERQNRLAEEKARREEEDAKRRAEEDLK. The disordered stretch occupies residues 121–200; sequence RAERAEQQRI…TAREMKKKIL (80 aa). Phosphoserine occurs at positions 169, 176, and 177. Over residues 191 to 200 the composition is skewed to basic and acidic residues; that stretch reads TAREMKKKIL. S213 carries the post-translational modification Phosphoserine. Y229 is modified (phosphotyrosine).

The protein belongs to the troponin T family.

In terms of biological role, troponin T is the tropomyosin-binding subunit of troponin, the thin filament regulatory complex which confers calcium-sensitivity to striated muscle actomyosin ATPase activity. The protein is Troponin T, fast skeletal muscle (TNNT3) of Oryctolagus cuniculus (Rabbit).